The sequence spans 222 residues: Chromatin-associated protein SWI6 (222 aa).

The span at 1-15 shows a compositional bias: basic and acidic residues; that stretch reads MPVIKKEELSQKKDL. 2 disordered regions span residues 1–26 and 77–147; these read MPVIKKEELSQKKDLESEEEDSGLED and ETQD…DRQY. The segment covering 16–26 has biased composition (acidic residues); that stretch reads ESEEEDSGLED. A Chromo domain is found at 28 to 87; the sequence is YEVEKVIKHRGKGKNIEFLVRWKGYGPEYDTWEPTENVASAEEAVAAYWETQDKTATAPR.

In terms of assembly, interacts with DMT5.

It localises to the nucleus. Recognizes and binds histone H3 tails methylated at 'Lys-9', leading to epigenetic repression. Localizes DMT5 to heterochromatin characterized by trimethylation of histone H3 tails at 'Lys-9'. In Cryptococcus neoformans var. grubii serotype A (strain H99 / ATCC 208821 / CBS 10515 / FGSC 9487) (Filobasidiella neoformans var. grubii), this protein is Chromatin-associated protein SWI6.